A 243-amino-acid chain; its full sequence is Type III pantothenate kinase (243 aa).

6 to 13 contacts ATP; sequence DIGNTVAK. Substrate is bound by residues Tyr-86 and 93–96; that span reads GYDR. The active-site Proton acceptor is Asp-95. Asp-116 is a K(+) binding site. Residue Thr-119 participates in ATP binding. Thr-171 contributes to the substrate binding site.

This sequence belongs to the type III pantothenate kinase family. As to quaternary structure, homodimer. The cofactor is NH4(+). It depends on K(+) as a cofactor.

It is found in the cytoplasm. It catalyses the reaction (R)-pantothenate + ATP = (R)-4'-phosphopantothenate + ADP + H(+). Its pathway is cofactor biosynthesis; coenzyme A biosynthesis; CoA from (R)-pantothenate: step 1/5. In terms of biological role, catalyzes the phosphorylation of pantothenate (Pan), the first step in CoA biosynthesis. The sequence is that of Type III pantothenate kinase from Bacteroides fragilis (strain ATCC 25285 / DSM 2151 / CCUG 4856 / JCM 11019 / LMG 10263 / NCTC 9343 / Onslow / VPI 2553 / EN-2).